Consider the following 204-residue polypeptide: 3,4-dihydroxy-2-butanone 4-phosphate synthase (204 aa).

Residue E30 participates in Mg(2+) binding. D34 lines the D-ribulose 5-phosphate pocket. Residue C59 is modified to S-glutathionyl cysteine. D-ribulose 5-phosphate-binding positions include T85 and R142 to T146. H145 is a Mg(2+) binding site.

As to quaternary structure, homodimer. Mg(2+) is required as a cofactor. The cofactor is Mn(2+). S-glutathionylation is reversible and dependent on a glutaredoxin.

The enzyme catalyses D-ribulose 5-phosphate = (2S)-2-hydroxy-3-oxobutyl phosphate + formate + H(+). The protein operates within cofactor biosynthesis; riboflavin biosynthesis; 2-hydroxy-3-oxobutyl phosphate from D-ribulose 5-phosphate: step 1/1. Functionally, catalyzes the conversion of D-ribulose 5-phosphate to formate and 3,4-dihydroxy-2-butanone 4-phosphate. The polypeptide is 3,4-dihydroxy-2-butanone 4-phosphate synthase (RIB3) (Candida albicans (strain SC5314 / ATCC MYA-2876) (Yeast)).